The primary structure comprises 626 residues: L-amino-acid oxidase 4 (626 aa).

The signal sequence occupies residues 1-18 (KSFFRSLVAASLVIVSYS). Residue N54 is glycosylated (N-linked (GlcNAc...) asparagine). The FAD site is built by G75, E94, A95, R102, M122, and R123. R123 is a binding site for L-glutamate. R123 provides a ligand contact to L-glutamine. R123 serves as a coordination point for L-lysine. Residue R123 participates in L-phenylalanine binding. N164, N193, and N331 each carry an N-linked (GlcNAc...) asparagine glycan. FAD is bound at residue V334. Y457 contributes to the L-glutamate binding site. Position 457 (Y457) interacts with L-glutamine. Residue Y457 participates in L-lysine binding. Y457 lines the L-phenylalanine pocket. Position 551 (E551) interacts with FAD. Position 558 (A558) interacts with L-phenylalanine. Residues W559 and V560 each coordinate FAD.

Belongs to the flavin monoamine oxidase family. FIG1 subfamily. In terms of assembly, homodimer. FAD serves as cofactor. Post-translationally, out of the 4 glycosylated residues, Asn-54 is hypermannosylated. The presence of a hypermannosylated N-glycan on Asn-54 leads to adoption of a more active conformation in the absence of acid activation.

It localises to the secreted. It catalyses the reaction an L-alpha-amino acid + O2 + H2O = a 2-oxocarboxylate + H2O2 + NH4(+). The catalysed reaction is L-lysine + O2 + H2O = 6-amino-2-oxohexanoate + H2O2 + NH4(+). The enzyme catalyses L-glutamate + O2 + H2O = H2O2 + 2-oxoglutarate + NH4(+). It carries out the reaction L-arginine + O2 + H2O = 5-guanidino-2-oxopentanoate + H2O2 + NH4(+). It catalyses the reaction L-leucine + O2 + H2O = 4-methyl-2-oxopentanoate + H2O2 + NH4(+). The catalysed reaction is L-asparagine + O2 + H2O = 2-oxosuccinamate + H2O2 + NH4(+). The enzyme catalyses L-histidine + O2 + H2O = 3-(imidazol-5-yl)pyruvate + H2O2 + NH4(+). It carries out the reaction L-isoleucine + O2 + H2O = (S)-3-methyl-2-oxopentanoate + H2O2 + NH4(+). It catalyses the reaction L-methionine + O2 + H2O = 4-methylsulfanyl-2-oxobutanoate + H2O2 + NH4(+). The catalysed reaction is L-phenylalanine + O2 + H2O = 3-phenylpyruvate + H2O2 + NH4(+). The enzyme catalyses L-tyrosine + O2 + H2O = 3-(4-hydroxyphenyl)pyruvate + H2O2 + NH4(+). It carries out the reaction L-glutamine + O2 + H2O = 2-oxoglutaramate + H2O2 + NH4(+). It catalyses the reaction L-alanine + O2 + H2O = pyruvate + H2O2 + NH4(+). LAAO4 is activated by exposure to acidic pH, the detergent sodium dodecyl sulfate, or freezing. Functionally, catalyzes the oxidative deamination of L-amino acids with molecular oxygen to the corresponding alpha-keto acids and ammonia. L-glutamine shows the highest relative activity but LAAO4 has a broad substrate specificity, including L-amino acids with big aromatic, acidic and basic side chains. Methyl esters of these L-amino acids are also accepted, ethyl esters are converted but with lower activity, whereas D-Amino acids are not converted. No reaction is detected for small polar amino acids such as L-cysteine or L-aspartate, and very little for small, branched hydrophobic amino acids like L-valine. In Hebeloma cylindrosporum, this protein is L-amino-acid oxidase 4.